We begin with the raw amino-acid sequence, 742 residues long: Polyphosphate kinase (742 aa).

An ATP-binding site is contributed by asparagine 91. Residues arginine 431 and arginine 461 each coordinate Mg(2+). Histidine 491 acts as the Phosphohistidine intermediate in catalysis. ATP is bound by residues tyrosine 524, arginine 624, and histidine 652. The segment at 718 to 742 (WTASPQEGHSVRDHQESLMERHRSP) is disordered. Residues 726–742 (HSVRDHQESLMERHRSP) show a composition bias toward basic and acidic residues.

This sequence belongs to the polyphosphate kinase 1 (PPK1) family. Mg(2+) is required as a cofactor. In terms of processing, an intermediate of this reaction is the autophosphorylated ppk in which a phosphate is covalently linked to a histidine residue through a N-P bond.

The enzyme catalyses [phosphate](n) + ATP = [phosphate](n+1) + ADP. In terms of biological role, catalyzes the reversible transfer of the terminal phosphate of ATP to form a long-chain polyphosphate (polyP). The protein is Polyphosphate kinase of Mycobacterium bovis (strain ATCC BAA-935 / AF2122/97).